The chain runs to 380 residues: 1-deoxy-D-xylulose 5-phosphate reductoisomerase (380 aa).

The NADPH site is built by Thr10, Gly11, Ser12, Ile13, Gly36, Arg37, Asn38, and Asn120. Lys121 contributes to the 1-deoxy-D-xylulose 5-phosphate binding site. Residue Glu122 participates in NADPH binding. Asp146 contributes to the Mn(2+) binding site. Positions 147, 148, 172, and 195 each coordinate 1-deoxy-D-xylulose 5-phosphate. Glu148 contributes to the Mn(2+) binding site. An NADPH-binding site is contributed by Gly201. 1-deoxy-D-xylulose 5-phosphate contacts are provided by Ser208, Asn213, Lys214, and Glu217. Glu217 lines the Mn(2+) pocket.

The protein belongs to the DXR family. Mg(2+) is required as a cofactor. The cofactor is Mn(2+).

The catalysed reaction is 2-C-methyl-D-erythritol 4-phosphate + NADP(+) = 1-deoxy-D-xylulose 5-phosphate + NADPH + H(+). It participates in isoprenoid biosynthesis; isopentenyl diphosphate biosynthesis via DXP pathway; isopentenyl diphosphate from 1-deoxy-D-xylulose 5-phosphate: step 1/6. In terms of biological role, catalyzes the NADPH-dependent rearrangement and reduction of 1-deoxy-D-xylulose-5-phosphate (DXP) to 2-C-methyl-D-erythritol 4-phosphate (MEP). The protein is 1-deoxy-D-xylulose 5-phosphate reductoisomerase of Listeria monocytogenes serovar 1/2a (strain ATCC BAA-679 / EGD-e).